Reading from the N-terminus, the 430-residue chain is Delta(14)-sterol reductase (430 aa).

6 helical membrane passes run 12-32 (IGTG…HFLI), 67-87 (LAVA…PAEI), 109-129 (FLVF…TWWF), 230-250 (FVSD…VDAL), 267-287 (LGVM…CLQA), and 290-310 (LASF…AVQF). Residues lysine 323, arginine 327, leucine 350, tryptophan 355, and 362–363 (NY) contribute to the NADP(+) site. The next 2 helical transmembrane spans lie at 349-369 (LLIS…DWIM) and 376-396 (TTGF…ILLL). Residues aspartate 402, 406-410 (CREKY), and tyrosine 417 each bind NADP(+).

It belongs to the ERG4/ERG24 family.

Its subcellular location is the membrane. The enzyme catalyses 4,4-dimethyl-5alpha-cholesta-8,24-dien-3beta-ol + NADP(+) = 4,4-dimethyl-5alpha-cholesta-8,14,24-trien-3beta-ol + NADPH + H(+). Its pathway is steroid biosynthesis; zymosterol biosynthesis; zymosterol from lanosterol: step 2/6. In terms of biological role, reduces the C14=C15 double bond of 4,4-dimethyl-cholesta-8,14,24-trienol to produce 4,4-dimethyl-cholesta-8,24-dienol. The polypeptide is Delta(14)-sterol reductase (ERG3) (Ascobolus immersus).